Here is an 80-residue protein sequence, read N- to C-terminus: ATP synthase subunit c (80 aa).

Transmembrane regions (helical) follow at residues 11-31 (IAAT…IGIL) and 54-74 (FIVM…GLYI).

It belongs to the ATPase C chain family. In terms of assembly, F-type ATPases have 2 components, F(1) - the catalytic core - and F(0) - the membrane proton channel. F(1) has five subunits: alpha(3), beta(3), gamma(1), delta(1), epsilon(1). F(0) has three main subunits: a(1), b(2) and c(10-14). The alpha and beta chains form an alternating ring which encloses part of the gamma chain. F(1) is attached to F(0) by a central stalk formed by the gamma and epsilon chains, while a peripheral stalk is formed by the delta and b chains.

It is found in the cell membrane. Its function is as follows. F(1)F(0) ATP synthase produces ATP from ADP in the presence of a proton or sodium gradient. F-type ATPases consist of two structural domains, F(1) containing the extramembraneous catalytic core and F(0) containing the membrane proton channel, linked together by a central stalk and a peripheral stalk. During catalysis, ATP synthesis in the catalytic domain of F(1) is coupled via a rotary mechanism of the central stalk subunits to proton translocation. Key component of the F(0) channel; it plays a direct role in translocation across the membrane. A homomeric c-ring of between 10-14 subunits forms the central stalk rotor element with the F(1) delta and epsilon subunits. This is ATP synthase subunit c from Baumannia cicadellinicola subsp. Homalodisca coagulata.